The chain runs to 134 residues: Methylglyoxal synthase (134 aa).

The region spanning methionine 1–glutamate 134 is the MGS-like domain. Substrate-binding positions include histidine 8, lysine 12, threonine 34–threonine 37, and serine 54–glycine 55. Aspartate 60 (proton donor/acceptor) is an active-site residue. Histidine 87 contributes to the substrate binding site.

Belongs to the methylglyoxal synthase family.

It carries out the reaction dihydroxyacetone phosphate = methylglyoxal + phosphate. In terms of biological role, catalyzes the formation of methylglyoxal from dihydroxyacetone phosphate. The polypeptide is Methylglyoxal synthase (Listeria welshimeri serovar 6b (strain ATCC 35897 / DSM 20650 / CCUG 15529 / CIP 8149 / NCTC 11857 / SLCC 5334 / V8)).